A 249-amino-acid chain; its full sequence is Formylaminopyrimidine import ATP-binding protein ThiZ (249 aa).

One can recognise an ABC transporter domain in the interval 6–228 (LTFEEVSFAY…RRKMETTEKM (223 aa)). ATP is bound at residue 39-46 (AKSGSGKS).

The protein belongs to the ABC transporter superfamily. In terms of assembly, the complex is likely composed of an ATP-binding protein (ThiZ), a transmembrane protein (ThiX) and a solute-binding protein (ThiY).

The protein resides in the cell membrane. It participates in cofactor biosynthesis; thiamine diphosphate biosynthesis. Functionally, participates in a thiamine pyrimidine salvage pathway as part of the ABC transporter complex ThiXYZ involved in the import of thiamine degradation products such as the formylaminopyrimidine N-formyl-4-amino-5-aminomethyl-2-methylpyrimidine (FAMP). Is likely responsible for energy coupling to the transport system. This Halalkalibacterium halodurans (strain ATCC BAA-125 / DSM 18197 / FERM 7344 / JCM 9153 / C-125) (Bacillus halodurans) protein is Formylaminopyrimidine import ATP-binding protein ThiZ.